Reading from the N-terminus, the 292-residue chain is 4-hydroxy-tetrahydrodipicolinate synthase (292 aa).

T45 lines the pyruvate pocket. Y133 acts as the Proton donor/acceptor in catalysis. K162 acts as the Schiff-base intermediate with substrate in catalysis. I204 contributes to the pyruvate binding site.

This sequence belongs to the DapA family. In terms of assembly, homotetramer; dimer of dimers.

The protein resides in the cytoplasm. It carries out the reaction L-aspartate 4-semialdehyde + pyruvate = (2S,4S)-4-hydroxy-2,3,4,5-tetrahydrodipicolinate + H2O + H(+). It functions in the pathway amino-acid biosynthesis; L-lysine biosynthesis via DAP pathway; (S)-tetrahydrodipicolinate from L-aspartate: step 3/4. Functionally, catalyzes the condensation of (S)-aspartate-beta-semialdehyde [(S)-ASA] and pyruvate to 4-hydroxy-tetrahydrodipicolinate (HTPA). This is 4-hydroxy-tetrahydrodipicolinate synthase from Oleidesulfovibrio alaskensis (strain ATCC BAA-1058 / DSM 17464 / G20) (Desulfovibrio alaskensis).